We begin with the raw amino-acid sequence, 358 residues long: Trans-enoyl reductase milB (358 aa).

Residues 48–51 (VDTK), 170–173 (ATAT), 193–196 (SAKH), tyrosine 211, 258–259 (LD), and 349–350 (VR) contribute to the NADP(+) site.

It belongs to the zinc-containing alcohol dehydrogenase family. In terms of assembly, monomer.

It carries out the reaction 10 malonyl-CoA + acetyl-CoA + 3 AH2 + 8 NADPH + 18 H(+) = cordypyrone A + 3 A + 10 CO2 + 8 NADP(+) + 11 CoA + 8 H2O. Its pathway is secondary metabolite biosynthesis. Functionally, trans-enoyl reductase; part of the gene cluster that mediates the biosynthesis of cordypyrones A and B, 2 pyrones that show modest activities against pathogenic bacteria including methicillin-resistant Staphylococcus aureus (MRSA), Mycobacterium tuberculosis and Bacillus cereus. The HR-PKS milA catalyzes the formation of cordypyrones A via condensation of one acetate with 10 malonate units. Since milA lacks an enoyl reductase domain, the 2 beta-keto processing domains DH and KR of milA collaborate with the trans-enoyl reductase milB to catalyze the different levels of reduction. The cytochrome P450 monooxygenase milC then hydroxylates the C-22 of cordypyrones A to yield cordypyrones B. The polypeptide is Trans-enoyl reductase milB (Cordyceps militaris (strain CM01) (Caterpillar fungus)).